The primary structure comprises 226 residues: UPF0502 protein Daci_5373 (226 aa).

The protein belongs to the UPF0502 family.

The sequence is that of UPF0502 protein Daci_5373 from Delftia acidovorans (strain DSM 14801 / SPH-1).